An 808-amino-acid chain; its full sequence is Envelope glycoprotein B (808 aa).

A signal peptide spans 1 to 19; it reads MVPNKHLLLIILSFSTACG. Residues 20 to 701 lie on the Virion surface side of the membrane; sequence QTTPTTAVEK…TGILNFIKNP (682 aa). N-linked (GlcNAc...) asparagine; by host glycosylation occurs at Asn30. Cystine bridges form between Cys45–Cys498, Cys62–Cys454, Cys136–Cys201, Cys291–Cys338, and Cys520–Cys557. Residues 101–107 form an involved in fusion and/or binding to host membrane region; that stretch reads IFNGWTR. The N-linked (GlcNAc...) asparagine; by host glycan is linked to Asn158. The segment at 187–195 is involved in fusion and/or binding to host membrane; that stretch reads GWLWGTYRT. N-linked (GlcNAc...) asparagine; by host glycans are attached at residues Asn239, Asn251, Asn285, Asn331, Asn344, Asn355, Asn361, Asn532, Asn569, Asn587, and Asn598. Hydrophobic membrane proximal region stretches follow at residues 647–699 and 658–698; these read FDNS…NFIK and IIQD…LNFI. A helical transmembrane segment spans residues 702 to 722; the sequence is LGGMFTFLLIGAVIILVILLV. Residues 723–808 are Intravirion-facing; the sequence is RRTNNMSQAP…KQISTEDKIV (86 aa).

This sequence belongs to the herpesviridae glycoprotein B family. As to quaternary structure, homotrimer; disulfide-linked. Binds to heparan sulfate proteoglycans. Interacts with gH/gL heterodimer. Post-translationally, a proteolytic cleavage by host furin generates two subunits that remain linked by disulfide bonds.

It localises to the virion membrane. The protein resides in the host cell membrane. It is found in the host endosome membrane. Its subcellular location is the host Golgi apparatus membrane. Its function is as follows. Envelope glycoprotein that forms spikes at the surface of virion envelope. Essential for the initial attachment to heparan sulfate moieties of the host cell surface proteoglycans. Involved in fusion of viral and cellular membranes leading to virus entry into the host cell. Following initial binding to its host receptors, membrane fusion is mediated by the fusion machinery composed at least of gB and the heterodimer gH/gL. May be involved in the fusion between the virion envelope and the outer nuclear membrane during virion egress. This is Envelope glycoprotein B from Saimiriine herpesvirus 2 (strain 11) (SaHV-2).